A 545-amino-acid chain; its full sequence is CTP synthase (545 aa).

Residues 2–266 are amidoligase domain; it reads TTNYIFVTGG…DDYICKRFSL (265 aa). A CTP-binding site is contributed by serine 14. Serine 14 is a UTP binding site. ATP is bound by residues 15–20 and aspartate 72; that span reads SLGKGI. Positions 72 and 140 each coordinate Mg(2+). Residues 147 to 149, 187 to 192, and lysine 223 each bind CTP; these read DIE and KTKPTQ. UTP-binding positions include 187–192 and lysine 223; that span reads KTKPTQ. 239–241 is a binding site for ATP; that stretch reads KDV. The 252-residue stretch at 291–542 folds into the Glutamine amidotransferase type-1 domain; it reads TIGMVGKYIE…VKAANEHQKR (252 aa). Glycine 352 is an L-glutamine binding site. Cysteine 379 serves as the catalytic Nucleophile; for glutamine hydrolysis. L-glutamine is bound by residues 380–383, glutamate 403, and arginine 470; that span reads LGMQ. Catalysis depends on residues histidine 515 and glutamate 517.

The protein belongs to the CTP synthase family. Homotetramer.

It carries out the reaction UTP + L-glutamine + ATP + H2O = CTP + L-glutamate + ADP + phosphate + 2 H(+). It catalyses the reaction L-glutamine + H2O = L-glutamate + NH4(+). The catalysed reaction is UTP + NH4(+) + ATP = CTP + ADP + phosphate + 2 H(+). It functions in the pathway pyrimidine metabolism; CTP biosynthesis via de novo pathway; CTP from UDP: step 2/2. Allosterically activated by GTP, when glutamine is the substrate; GTP has no effect on the reaction when ammonia is the substrate. The allosteric effector GTP functions by stabilizing the protein conformation that binds the tetrahedral intermediate(s) formed during glutamine hydrolysis. Inhibited by the product CTP, via allosteric rather than competitive inhibition. Functionally, catalyzes the ATP-dependent amination of UTP to CTP with either L-glutamine or ammonia as the source of nitrogen. Regulates intracellular CTP levels through interactions with the four ribonucleotide triphosphates. The chain is CTP synthase from Salmonella typhi.